A 301-amino-acid chain; its full sequence is Probable alpha-L-glutamate ligase (301 aa).

Residues 104–287 (LQLLARKGVG…VAGMIINWTE (184 aa)) enclose the ATP-grasp domain. Residues lysine 141, 178–179 (EF), aspartate 187, and 211–213 (RSN) each bind ATP. 3 residues coordinate Mg(2+): aspartate 248, glutamate 260, and asparagine 262. Mn(2+) is bound by residues aspartate 248, glutamate 260, and asparagine 262.

This sequence belongs to the RimK family. Mg(2+) serves as cofactor. Mn(2+) is required as a cofactor.

This Marinobacter nauticus (strain ATCC 700491 / DSM 11845 / VT8) (Marinobacter aquaeolei) protein is Probable alpha-L-glutamate ligase.